We begin with the raw amino-acid sequence, 288 residues long: uncharacterized protein (288 aa).

The HTH lysR-type domain maps to 1–59; the sequence is MDKLNAISIFCKVIETQSFTLAAKQQNISVAMASKLVSQLEEHLKTRLLQRTTRKIMPT. A DNA-binding region (H-T-H motif) is located at residues 19–38; the sequence is FTLAAKQQNISVAMASKLVS.

This sequence belongs to the LysR transcriptional regulatory family.

This is an uncharacterized protein from Haemophilus influenzae (strain ATCC 51907 / DSM 11121 / KW20 / Rd).